A 410-amino-acid polypeptide reads, in one-letter code: Multifunctional CCA protein (410 aa).

Gly8 and Arg11 together coordinate ATP. CTP-binding residues include Gly8 and Arg11. Mg(2+) is bound by residues Asp21 and Asp23. 3 residues coordinate ATP: Arg91, Arg138, and Arg141. The CTP site is built by Arg91, Arg138, and Arg141. The HD domain occupies 229–347 (TGIHQEMVSD…AQLALVCEAD (119 aa)).

It belongs to the tRNA nucleotidyltransferase/poly(A) polymerase family. Bacterial CCA-adding enzyme type 1 subfamily. Monomer. Can also form homodimers and oligomers. It depends on Mg(2+) as a cofactor. Ni(2+) is required as a cofactor.

The enzyme catalyses a tRNA precursor + 2 CTP + ATP = a tRNA with a 3' CCA end + 3 diphosphate. It catalyses the reaction a tRNA with a 3' CCA end + 2 CTP + ATP = a tRNA with a 3' CCACCA end + 3 diphosphate. Functionally, catalyzes the addition and repair of the essential 3'-terminal CCA sequence in tRNAs without using a nucleic acid template. Adds these three nucleotides in the order of C, C, and A to the tRNA nucleotide-73, using CTP and ATP as substrates and producing inorganic pyrophosphate. tRNA 3'-terminal CCA addition is required both for tRNA processing and repair. Also involved in tRNA surveillance by mediating tandem CCA addition to generate a CCACCA at the 3' terminus of unstable tRNAs. While stable tRNAs receive only 3'-terminal CCA, unstable tRNAs are marked with CCACCA and rapidly degraded. The protein is Multifunctional CCA protein of Xanthomonas oryzae pv. oryzae (strain MAFF 311018).